We begin with the raw amino-acid sequence, 147 residues long: Hemoglobin subunit beta-1 (147 aa).

Residue Val2 is modified to N-acetylvaline. Residues 3–147 (HLTGEEKAAV…VATALAHKYH (145 aa)) form the Globin domain. An N6-succinyllysine modification is found at Lys18. Position 45 is a phosphoserine (Ser45). Position 60 is an N6-succinyllysine (Lys60). Heme b is bound by residues His64 and His93. Asymmetric dimethylarginine is present on Arg105. A Phosphothreonine modification is found at Thr124.

It belongs to the globin family. As to quaternary structure, hb1 is a heterotetramer of two alpha chains and two beta-1 chains. In terms of tissue distribution, red blood cells.

Involved in oxygen transport from the lung to the various peripheral tissues. In Chalinolobus morio (Chocolate-wattled bat), this protein is Hemoglobin subunit beta-1 (HBB1).